Here is a 218-residue protein sequence, read N- to C-terminus: Peptide methionine sulfoxide reductase MsrA (218 aa).

The disordered stretch occupies residues 1 to 28 (MSFLDSYRKKTQMPSTDEALPGRAQPIP). The active site involves Cys57.

This sequence belongs to the MsrA Met sulfoxide reductase family.

It catalyses the reaction L-methionyl-[protein] + [thioredoxin]-disulfide + H2O = L-methionyl-(S)-S-oxide-[protein] + [thioredoxin]-dithiol. It carries out the reaction [thioredoxin]-disulfide + L-methionine + H2O = L-methionine (S)-S-oxide + [thioredoxin]-dithiol. Its function is as follows. Has an important function as a repair enzyme for proteins that have been inactivated by oxidation. Catalyzes the reversible oxidation-reduction of methionine sulfoxide in proteins to methionine. This is Peptide methionine sulfoxide reductase MsrA from Brucella anthropi (strain ATCC 49188 / DSM 6882 / CCUG 24695 / JCM 21032 / LMG 3331 / NBRC 15819 / NCTC 12168 / Alc 37) (Ochrobactrum anthropi).